We begin with the raw amino-acid sequence, 396 residues long: Multidrug resistance protein MdtL (396 aa).

Over 1-4 (MFRY) the chain is Cytoplasmic. The helical transmembrane segment at 5–25 (LLCCFGLVLMYPTGIDMYLVG) threads the bilayer. Topologically, residues 26-41 (LPQIANQLGATEAQLH) are periplasmic. A helical transmembrane segment spans residues 42 to 62 (IAFSVYLAGMATTMLFAGSLA). Topologically, residues 63-64 (DR) are cytoplasmic. The chain crosses the membrane as a helical span at residues 65–85 (IGRKPITLFSALLFALASYFA). Over 86-92 (ARSQSSD) the chain is Periplasmic. The helical transmembrane segment at 93-113 (LFLVARFVQGVGAGCCYVVAF) threads the bilayer. The Cytoplasmic portion of the chain corresponds to 114–131 (AILRDALDDKRRAKVLSM). A helical transmembrane segment spans residues 132-152 (VNGVTCIIPVIAPVIGHLIML). Topologically, residues 153–157 (RFPWP) are periplasmic. A helical membrane pass occupies residues 158 to 178 (SLFYTMAVMGLLVFGLCLFVL). Residues 179 to 209 (RETYSKASFHSQTLPRVQTESFKQGFFISRV) are Cytoplasmic-facing. Residues 210–230 (VITTLGVTTILSYVNVSPMLI) form a helical membrane-spanning segment. At 231-242 (MGQMGFDRGQYS) the chain is on the periplasmic side. Residues 243–263 (NTMAMTALVSMLASFSTPFLL) form a helical membrane-spanning segment. Residues 264–277 (NQFKEKSLILFSQT) lie on the Cytoplasmic side of the membrane. Transmembrane regions (helical) follow at residues 278-298 (LFAAAALVFILTQLGWLGQLF) and 299-319 (NLLGFGLVCSGFAIGFGVTMS). At 320–333 (QALSPFVARAGVAS) the chain is on the cytoplasmic side. A helical membrane pass occupies residues 334–354 (SLLGIAQVCTSALYIWVMGLL). Topologically, residues 355–360 (EVSAIN) are periplasmic. The chain crosses the membrane as a helical span at residues 361–381 (ILLAILAVGALISITLMLAVP). The Cytoplasmic portion of the chain corresponds to 382 to 396 (KLSEMVANEQIPESA).

The protein belongs to the major facilitator superfamily. DHA1 family. MdtL (TC 2.A.1.2.22) subfamily.

Its subcellular location is the cell inner membrane. The chain is Multidrug resistance protein MdtL from Shewanella sp. (strain ANA-3).